Here is a 274-residue protein sequence, read N- to C-terminus: Phosphoribosylaminoimidazole-succinocarboxamide synthase (274 aa).

The protein belongs to the SAICAR synthetase family.

The catalysed reaction is 5-amino-1-(5-phospho-D-ribosyl)imidazole-4-carboxylate + L-aspartate + ATP = (2S)-2-[5-amino-1-(5-phospho-beta-D-ribosyl)imidazole-4-carboxamido]succinate + ADP + phosphate + 2 H(+). The protein operates within purine metabolism; IMP biosynthesis via de novo pathway; 5-amino-1-(5-phospho-D-ribosyl)imidazole-4-carboxamide from 5-amino-1-(5-phospho-D-ribosyl)imidazole-4-carboxylate: step 1/2. The sequence is that of Phosphoribosylaminoimidazole-succinocarboxamide synthase from Nitrosopumilus maritimus (strain SCM1).